Consider the following 788-residue polypeptide: MKDKSIKVLEFNKIQEILKNYTCTKAAKDIIEDLKPYDSVYEVREHLEETKEAFKLLITKGAPPFEGVYDIRNGIYLAEKGSALLPGQLLKIAAVLRCARRFKEYINHKEEEESYRVLENICEGIFSLPKIEEEIFNAIEGEDEIADRASSILYNIRRSLKEKNYSVRDKINSLVRSYSSYLQENIYTVRGDRYVLPVKVEHKGAVPGLVHDQSSTGATLFIEPMSLVNLNNEIKELMLKEKAEIERILTVLSAKINANITGVKTDANIVWELDFIFAKAKFASEYNCTCPTINDEGIVDIIEGRHPLIDRREVVPISVKLGEEFTSLMITGPNTGGKTVTLKTVGLIHLMAMSGLMIPARENSVISYFNNVFADIGDEQSIEQSLSTFSSHMKNIVEIMDKADENSLVLFDELGAGTDPTEGAALAISILENLRKRGAKIIATTHYSELKAYALRKEGVENASVEFDVETLRPTYRLLIGIPGKSNAFEISKRLGLPDYIIDFARENISNENIRFEELIQNLQEKSIKAQEDARLAENLKLERDKEKKKYEEKLEGLQKVRDNALIDARREAKNIIKEAKEEADKILKDIRQLERMGYSSDARRKLEEERKKLKDKLDSIEEKEIKTVHKGEALKNVKEGDEVLLASINQKVIVLSKPDNKGDVLVQAGIMKITANIKDLRAAKGSNFNINSSKTKKSKKLNLNLRKVESSVDLRGMDAEEAIYTVDKYLDEAYLGGLGEVTIVHGKGTGVLRKTIMDMLKGHPHVKRHRLGEYGEGGTGVTVVEIK.

Position 332 to 339 (332 to 339) interacts with ATP; it reads GPNTGGKT. Positions 713 to 788 constitute a Smr domain; that stretch reads VDLRGMDAEE…GTGVTVVEIK (76 aa).

The protein belongs to the DNA mismatch repair MutS family. MutS2 subfamily. As to quaternary structure, homodimer. Binds to stalled ribosomes, contacting rRNA.

In terms of biological role, endonuclease that is involved in the suppression of homologous recombination and thus may have a key role in the control of bacterial genetic diversity. Acts as a ribosome collision sensor, splitting the ribosome into its 2 subunits. Detects stalled/collided 70S ribosomes which it binds and splits by an ATP-hydrolysis driven conformational change. Acts upstream of the ribosome quality control system (RQC), a ribosome-associated complex that mediates the extraction of incompletely synthesized nascent chains from stalled ribosomes and their subsequent degradation. Probably generates substrates for RQC. The polypeptide is Endonuclease MutS2 (Clostridium botulinum (strain Loch Maree / Type A3)).